Here is a 248-residue protein sequence, read N- to C-terminus: UPF0736 protein BT9727_1080 (248 aa).

This sequence belongs to the UPF0736 family.

The chain is UPF0736 protein BT9727_1080 from Bacillus thuringiensis subsp. konkukian (strain 97-27).